The primary structure comprises 387 residues: Formate-dependent phosphoribosylglycinamide formyltransferase (387 aa).

N(1)-(5-phospho-beta-D-ribosyl)glycinamide-binding positions include 12–13 (EL) and Glu72. Residues Arg104, Lys145, 150–155 (SSGKGQ), 185–188 (EEFI), and Glu193 contribute to the ATP site. Residues 109–300 (DLAAKDLKLL…EFELHIRAIL (192 aa)) enclose the ATP-grasp domain. Glu258 and Glu270 together coordinate Mg(2+). N(1)-(5-phospho-beta-D-ribosyl)glycinamide is bound by residues Asp277, Lys348, and 355 to 356 (RR).

The protein belongs to the PurK/PurT family. As to quaternary structure, homodimer.

It carries out the reaction N(1)-(5-phospho-beta-D-ribosyl)glycinamide + formate + ATP = N(2)-formyl-N(1)-(5-phospho-beta-D-ribosyl)glycinamide + ADP + phosphate + H(+). The protein operates within purine metabolism; IMP biosynthesis via de novo pathway; N(2)-formyl-N(1)-(5-phospho-D-ribosyl)glycinamide from N(1)-(5-phospho-D-ribosyl)glycinamide (formate route): step 1/1. In terms of biological role, involved in the de novo purine biosynthesis. Catalyzes the transfer of formate to 5-phospho-ribosyl-glycinamide (GAR), producing 5-phospho-ribosyl-N-formylglycinamide (FGAR). Formate is provided by PurU via hydrolysis of 10-formyl-tetrahydrofolate. The sequence is that of Formate-dependent phosphoribosylglycinamide formyltransferase from Leptospira borgpetersenii serovar Hardjo-bovis (strain JB197).